Consider the following 498-residue polypeptide: ATP synthase subunit beta, chloroplastic (498 aa).

Residue 172-179 (GGAGVGKT) coordinates ATP.

This sequence belongs to the ATPase alpha/beta chains family. F-type ATPases have 2 components, CF(1) - the catalytic core - and CF(0) - the membrane proton channel. CF(1) has five subunits: alpha(3), beta(3), gamma(1), delta(1), epsilon(1). CF(0) has four main subunits: a(1), b(1), b'(1) and c(9-12).

The protein localises to the plastid. Its subcellular location is the chloroplast thylakoid membrane. The catalysed reaction is ATP + H2O + 4 H(+)(in) = ADP + phosphate + 5 H(+)(out). Functionally, produces ATP from ADP in the presence of a proton gradient across the membrane. The catalytic sites are hosted primarily by the beta subunits. The chain is ATP synthase subunit beta, chloroplastic from Schisandra sphenanthera (Southern magnolia vine).